The primary structure comprises 355 residues: Putative transport protein PH1000 (355 aa).

The next 8 helical transmembrane spans lie at 34 to 54 (VTWI…LPFF), 55 to 75 (SPLF…IKLK), 84 to 104 (AILL…ILVY), 158 to 178 (FSVP…YFFL), 212 to 232 (VWLL…LIFK), 240 to 260 (ILAG…GWMI), 274 to 294 (IIAG…LPDF), and 310 to 330 (VLVL…GLII).

The protein belongs to the autoinducer-2 exporter (AI-2E) (TC 2.A.86) family.

The protein resides in the cell membrane. This Pyrococcus horikoshii (strain ATCC 700860 / DSM 12428 / JCM 9974 / NBRC 100139 / OT-3) protein is Putative transport protein PH1000.